Consider the following 133-residue polypeptide: Bacteriohemerythrin (133 aa).

7 residues coordinate Fe cation: His19, His56, Glu60, His75, His79, His115, and Asp120.

Belongs to the hemerythrin family. In terms of assembly, monomer.

Its function is as follows. Oxygen-binding protein. May be involved in a storage mechanism or for delivery to oxygen-requiring enzymes. The oxygen-binding site contains two iron atoms. This is Bacteriohemerythrin from Campylobacter jejuni subsp. jejuni serotype O:23/36 (strain 81-176).